A 490-amino-acid chain; its full sequence is Betaine aldehyde dehydrogenase (490 aa).

Residues Ser26, Ile27, and Asp93 each contribute to the K(+) site. An NAD(+)-binding site is contributed by 150 to 152 (GAW). Lys162 acts as the Charge relay system in catalysis. NAD(+) contacts are provided by residues 176–179 (KPSE) and 230–233 (GVET). Leu246 lines the K(+) pocket. Glu252 serves as the catalytic Proton acceptor. Gly254, Cys286, and Glu387 together coordinate NAD(+). Cys286 acts as the Nucleophile in catalysis. Cys286 carries the cysteine sulfenic acid (-SOH) modification. 2 residues coordinate K(+): Lys457 and Gly460. Catalysis depends on Glu464, which acts as the Charge relay system.

It belongs to the aldehyde dehydrogenase family. Dimer of dimers. The cofactor is K(+).

The enzyme catalyses betaine aldehyde + NAD(+) + H2O = glycine betaine + NADH + 2 H(+). It functions in the pathway amine and polyamine biosynthesis; betaine biosynthesis via choline pathway; betaine from betaine aldehyde: step 1/1. Its function is as follows. Involved in the biosynthesis of the osmoprotectant glycine betaine. Catalyzes the irreversible oxidation of betaine aldehyde to the corresponding acid. The polypeptide is Betaine aldehyde dehydrogenase (Acinetobacter baumannii (strain ACICU)).